Consider the following 620-residue polypeptide: 1-deoxy-D-xylulose-5-phosphate synthase (620 aa).

Thiamine diphosphate contacts are provided by residues His-80 and 121 to 123; that span reads GHS. A Mg(2+)-binding site is contributed by Asp-152. Residues 153–154, Asn-181, Tyr-288, and Glu-370 contribute to the thiamine diphosphate site; that span reads GA. Asn-181 contributes to the Mg(2+) binding site.

The protein belongs to the transketolase family. DXPS subfamily. As to quaternary structure, homodimer. Mg(2+) is required as a cofactor. The cofactor is thiamine diphosphate.

It carries out the reaction D-glyceraldehyde 3-phosphate + pyruvate + H(+) = 1-deoxy-D-xylulose 5-phosphate + CO2. The protein operates within metabolic intermediate biosynthesis; 1-deoxy-D-xylulose 5-phosphate biosynthesis; 1-deoxy-D-xylulose 5-phosphate from D-glyceraldehyde 3-phosphate and pyruvate: step 1/1. In terms of biological role, catalyzes the acyloin condensation reaction between C atoms 2 and 3 of pyruvate and glyceraldehyde 3-phosphate to yield 1-deoxy-D-xylulose-5-phosphate (DXP). This chain is 1-deoxy-D-xylulose-5-phosphate synthase, found in Escherichia coli O7:K1 (strain IAI39 / ExPEC).